A 559-amino-acid chain; its full sequence is S-layer protein (559 aa).

Positions 1 to 28 are cleaved as a signal peptide; the sequence is MAMSLKKIGAIAVGGAMVASALASGVMA. Residues Asn-108, Asn-130, Asn-155, Asn-222, and Asn-373 are each glycosylated (N-linked (GlcNAc...) asparagine).

It belongs to the Mj S-layer protein family.

It is found in the secreted. It localises to the cell wall. The protein resides in the S-layer. In terms of biological role, S-layer protein. The S-layer is a paracrystalline mono-layered assembly of proteins which coat the surface of the cell. The chain is S-layer protein from Methanothermococcus thermolithotrophicus (Methanococcus thermolithotrophicus).